We begin with the raw amino-acid sequence, 59 residues long: Toxin TxpA (59 aa).

A helical membrane pass occupies residues L7 to L27.

It localises to the cell membrane. Toxic component of a type I toxin-antitoxin (TA) system. Overexpression of txpA causes cell lysis; the TxpA protein has been suggested to act on the cell membrane or might possibly block cell wall synthesis. Overexpression in E.coli is not toxic. This is Toxin TxpA from Bacillus subtilis (strain 168).